Here is a 259-residue protein sequence, read N- to C-terminus: Eukaryotic translation initiation factor 3 subunit J (259 aa).

Residues 1 to 12 are compositionally biased toward low complexity; sequence MAAAAAAAAGDS. The segment at 1–70 is sufficient for interaction with EIF3B; sequence MAAAAAAAAG…KEEAEVKPEV (70 aa). Residues 1-111 are disordered; sequence MAAAAAAAAG…EPEEPKVLTP (111 aa). Phosphoserine is present on residues Ser-12, Ser-14, and Ser-21. Over residues 41 to 60 the composition is skewed to acidic residues; sequence EGEDEDEDVKDNWDDDDDEK. The segment covering 61 to 107 has biased composition (basic and acidic residues); that stretch reads KEEAEVKPEVKISEKKKIAEKIKEKERQQKKRQEEIKKRLEEPEEPK. A coiled-coil region spans residues 71–136; sequence KISEKKKIAE…ESDLELAKET (66 aa). Residue Lys-107 forms a Glycyl lysine isopeptide (Lys-Gly) (interchain with G-Cter in SUMO2) linkage. At Thr-110 the chain carries Phosphothreonine. Ser-128 carries the phosphoserine modification. The disordered stretch occupies residues 218–247; that stretch reads SKAKKKKKGVVPGGGLKATMKDDLADYGGY. Positions 244–259 are promotes stable association with the 40S ribosome; sequence YGGYDGGYVQDYEDFM. Tyr-255 is subject to Phosphotyrosine.

The protein belongs to the eIF-3 subunit J family. Component of the eukaryotic translation initiation factor 3 (eIF-3) complex, which is composed of 13 subunits: EIF3A, EIF3B, EIF3C, EIF3D, EIF3E, EIF3F, EIF3G, EIF3H, EIF3I, EIF3J, EIF3K, EIF3L and EIF3M. The eIF-3 complex appears to include 3 stable modules: module A is composed of EIF3A, EIF3B, EIF3G and EIF3I; module B is composed of EIF3F, EIF3H, and EIF3M; and module C is composed of EIF3C, EIF3D, EIF3E, EIF3K and EIF3L. EIF3C of module C binds EIF3B of module A and EIF3H of module B, thereby linking the three modules. EIF3J is a labile subunit that binds to the eIF-3 complex via EIF3B. The eIF-3 complex interacts with RPS6KB1 under conditions of nutrient depletion. Mitogenic stimulation leads to binding and activation of a complex composed of MTOR and RPTOR, leading to phosphorylation and release of RPS6KB1 and binding of EIF4B to eIF-3. Phosphorylated. Phosphorylation is enhanced upon serum stimulation.

Its subcellular location is the cytoplasm. Its function is as follows. Component of the eukaryotic translation initiation factor 3 (eIF-3) complex, which is required for several steps in the initiation of protein synthesis. The eIF-3 complex associates with the 40S ribosome and facilitates the recruitment of eIF-1, eIF-1A, eIF-2:GTP:methionyl-tRNAi and eIF-5 to form the 43S pre-initiation complex (43S PIC). The eIF-3 complex stimulates mRNA recruitment to the 43S PIC and scanning of the mRNA for AUG recognition. The eIF-3 complex is also required for disassembly and recycling of post-termination ribosomal complexes and subsequently prevents premature joining of the 40S and 60S ribosomal subunits prior to initiation. The eIF-3 complex specifically targets and initiates translation of a subset of mRNAs involved in cell proliferation, including cell cycling, differentiation and apoptosis, and uses different modes of RNA stem-loop binding to exert either translational activation or repression. This subunit binds directly within the mRNA entry channel of the 40S ribosome to the aminoacyl (A) site. It may regulate the interaction between the 43S PIC and mRNA. The protein is Eukaryotic translation initiation factor 3 subunit J of Pongo abelii (Sumatran orangutan).